A 282-amino-acid chain; its full sequence is uncharacterized protein (282 aa).

Residues 22-42 (YLFTLGSFVTMFFVLCISPVF) form a helical membrane-spanning segment.

It localises to the cell membrane. This is an uncharacterized protein from Bacillus anthracis.